Here is an 822-residue protein sequence, read N- to C-terminus: Protein smoothened (822 aa).

An N-terminal signal peptide occupies residues 1–28 (MSSKRPCSIVGSFWMLWIWTATSMVARA). The Extracellular segment spans residues 29-212 (VILHPNETIF…EDEHSDMHSY (184 aa)). Asparagine 34 carries an N-linked (GlcNAc...) asparagine glycan. 5 disulfides stabilise this stretch: cysteine 42-cysteine 157, cysteine 48-cysteine 112, cysteine 56-cysteine 105, cysteine 96-cysteine 132, and cysteine 125-cysteine 147. An FZ domain is found at 43-160 (KKSTTCEVLK…EQFPKGCQNE (118 aa)). Residue aspartate 73 participates in cholesterol binding. An N-linked (GlcNAc...) asparagine glycan is attached at asparagine 167. Intrachain disulfides connect cysteine 172–cysteine 192, cysteine 196–cysteine 274, and cysteine 293–cysteine 369. The helical transmembrane segment at 213–233 (IAVFGTITLLCTFFTLATFLA) threads the bilayer. At 234 to 241 (DWKNSNRY) the chain is on the cytoplasmic side. Residues 242 to 262 (PAVILFYVNACFFIGSIGWLA) form a helical membrane-spanning segment. Topologically, residues 263-293 (QFMDGARNEIVCKSDNTMRLGEPSSTETLSC) are extracellular. Residues 294–314 (VIIFVIVYYSLMSGVIWFVML) traverse the membrane as a helical segment. Topologically, residues 315–335 (TYAWHTSFKALGTTHQPLSGK) are cytoplasmic. Residues 336-356 (TSYFHLVTWSIPFILTVAILA) form a helical membrane-spanning segment. At 357 to 381 (NSQVDADSVSGICFVGYRYYEYRAG) the chain is on the extracellular side. Tyrosine 373 contributes to the cholesterol binding site. A helical transmembrane segment spans residues 382–402 (FVLAPIGFVLVIGGYFLIRGV). Over 403 to 430 (MTLFSIKSNHPGLLSEKAASKINETMLR) the chain is Cytoplasmic. The chain crosses the membrane as a helical span at residues 431-451 (LGIFGFLAFGFVLITFGCHFY). Over 452–503 (DFFNQAEWERSFREYVLCEANVTIAHQTNKPIPECAIKNRPSLLVGKINLFS) the chain is Extracellular. Cysteine 469 and cysteine 486 are oxidised to a cystine. A glycan (N-linked (GlcNAc...) asparagine) is linked at asparagine 472. A helical transmembrane segment spans residues 504 to 524 (MFGTGIAMSTWVWTKATILIW). The Cytoplasmic segment spans residues 525–822 (KRTWFRIIGR…AELLDADSDF (298 aa)). Residues 645 to 687 (MMKRKKKKKKRRKEVRPAGPAADEGNPAYHRREFGPSAVPRLP) form a disordered region. The segment covering 647–658 (KRKKKKKKRRKE) has biased composition (basic residues).

The protein belongs to the G-protein coupled receptor Fz/Smo family. As to quaternary structure, monomer.

It localises to the cell membrane. It is found in the cell projection. Its subcellular location is the cilium. Functionally, g protein-coupled receptor which associates with the patched protein (ptch) to transduce Hedgehog protein signaling. Binding of sonic hedgehog (shh) to its receptor patched prevents inhibition of smoothened (smo) by patched. When active, smo binds to and sequesters protein kinase A catalytic subunit prkaca at the cell membrane, preventing prkaca-mediated phosphorylation of gli transcription factors which releases the gli proteins from prkaca-mediated inhibition and allows for transcriptional activation of Hedgehog signaling pathway target genes. Required for the development of primary and secondary motoneurons but not for the specification of midbrain dopaminergic neurons or development of the medial floor plate. Required for induction of lateral floor plate and posterior motoneurons, anterior neural plate patterning, dorsoventral forebrain patterning, dorsoventral retinal patterning, optic stalk development, and formation of the forebrain primary axonal scaffold. Required to regulate the formation of a subset of cerebellar neurons by limiting wnt1 expression which controls cerebellar expression of transcription factor olig2. Required for development of the pancreas. Required for muscle development. Required for the formation of a single continuous intestinal lumen from multiple discontinuous lumens, probably by regulating remodeling through rab11a-mediated trafficking to facilitate lumen fusion. Required for development of the adenohypophysis. Required for anteroposterior patterning of the otic vesicle. Required for development of the anterior craniofacial skeleton. Required for patterning of the caudal fin. Required during gastrulation and early somitogenesis stages to promote cardiomyocyte formation by regulating the specification of myocardial progenitors. Required for induction of arterial endothelial cell formation by repressing venous cell fate. This Danio rerio (Zebrafish) protein is Protein smoothened.